We begin with the raw amino-acid sequence, 1752 residues long: Chitin synthase E (1752 aa).

An ATP-binding site is contributed by 1-8 (GESGSGKT). The segment at 492–520 (SSKPLRMPSMARRKTSPSSRLAFDAGDAD) is disordered. An actin-binding region spans residues 558–582 (LDIVNKCLSSTNLNPYFIFCLKPND). A run of 2 helical transmembrane segments spans residues 789 to 809 (WIAL…KLFG) and 828 to 848 (LIIW…PGLV). The Cytochrome b5 heme-binding domain occupies 852-940 (QHVYSAAELS…LLDYRPTNIS (89 aa)). N-linked (GlcNAc...) asparagine glycosylation is found at Asn-938 and Asn-963. Residues 1099–1119 (FILAISVLICSIIVFKFLAAL) form a helical membrane-spanning segment. Asn-1322, Asn-1356, and Asn-1462 each carry an N-linked (GlcNAc...) asparagine glycan. The next 3 helical transmembrane spans lie at 1494–1514 (LSTV…YWLV), 1520–1540 (IPYT…LIFI), and 1547–1567 (MVGW…PCPS). Asn-1685 carries an N-linked (GlcNAc...) asparagine glycan. The DEK-C domain occupies 1689–1744 (LPSDDAILAEIREILRTADLMSVTKKSIKLELERAFGVNLDLKRPYINSGKGYTFP).

The protein in the N-terminal section; belongs to the TRAFAC class myosin-kinesin ATPase superfamily. Myosin family. In the C-terminal section; belongs to the chitin synthase family. Class V subfamily.

The protein localises to the cell membrane. Its subcellular location is the cell septum. It is found in the cell tip. It carries out the reaction [(1-&gt;4)-N-acetyl-beta-D-glucosaminyl](n) + UDP-N-acetyl-alpha-D-glucosamine = [(1-&gt;4)-N-acetyl-beta-D-glucosaminyl](n+1) + UDP + H(+). Its function is as follows. Polymerizes chitin, a structural polymer of the cell wall and septum, by transferring the sugar moiety of UDP-GlcNAc to the non-reducing end of the growing chitin polymer. Important for hyphal growth and conidiophore development but not pathogenicity. This chain is Chitin synthase E, found in Aspergillus fumigatus (Neosartorya fumigata).